We begin with the raw amino-acid sequence, 265 residues long: Hydroxyethylthiazole kinase (265 aa).

Residue Met-55 coordinates substrate. Positions 130 and 176 each coordinate ATP. A substrate-binding site is contributed by Gly-203.

Belongs to the Thz kinase family. The cofactor is Mg(2+).

The catalysed reaction is 5-(2-hydroxyethyl)-4-methylthiazole + ATP = 4-methyl-5-(2-phosphooxyethyl)-thiazole + ADP + H(+). The protein operates within cofactor biosynthesis; thiamine diphosphate biosynthesis; 4-methyl-5-(2-phosphoethyl)-thiazole from 5-(2-hydroxyethyl)-4-methylthiazole: step 1/1. In terms of biological role, catalyzes the phosphorylation of the hydroxyl group of 4-methyl-5-beta-hydroxyethylthiazole (THZ). The chain is Hydroxyethylthiazole kinase from Leptospira interrogans serogroup Icterohaemorrhagiae serovar Lai (strain 56601).